The chain runs to 698 residues: Elongation factor G (698 aa).

Residues 10–285 (DKTRNIGIMA…AVVDYLPSPL (276 aa)) form the tr-type G domain. GTP is bound by residues 19–26 (AHIDAGKT), 83–87 (DTPGH), and 137–140 (NKMD).

This sequence belongs to the TRAFAC class translation factor GTPase superfamily. Classic translation factor GTPase family. EF-G/EF-2 subfamily.

The protein resides in the cytoplasm. Catalyzes the GTP-dependent ribosomal translocation step during translation elongation. During this step, the ribosome changes from the pre-translocational (PRE) to the post-translocational (POST) state as the newly formed A-site-bound peptidyl-tRNA and P-site-bound deacylated tRNA move to the P and E sites, respectively. Catalyzes the coordinated movement of the two tRNA molecules, the mRNA and conformational changes in the ribosome. This Lactiplantibacillus plantarum (strain ATCC BAA-793 / NCIMB 8826 / WCFS1) (Lactobacillus plantarum) protein is Elongation factor G.